The following is a 373-amino-acid chain: Flagellar P-ring protein (373 aa).

Residues 1–28 (MPSVSAVILKLAAAALSALLLSGVAANA) form the signal peptide.

Belongs to the FlgI family. As to quaternary structure, the basal body constitutes a major portion of the flagellar organelle and consists of four rings (L,P,S, and M) mounted on a central rod.

Its subcellular location is the periplasm. It is found in the bacterial flagellum basal body. Functionally, assembles around the rod to form the L-ring and probably protects the motor/basal body from shearing forces during rotation. The sequence is that of Flagellar P-ring protein from Rhodopseudomonas palustris (strain HaA2).